Reading from the N-terminus, the 114-residue chain is uncharacterized protein (114 aa).

Residues 31 to 72 (EFEKLVSEQMKTMDKLLDLQSELDRCKQIEAELRHLERDARL) are a coiled coil.

This is an uncharacterized protein from Bacillus subtilis (strain 168).